The chain runs to 438 residues: Glutamyl-tRNA(Gln) amidotransferase subunit D (438 aa).

One can recognise an Asparaginase/glutaminase domain in the interval proline 92 to asparagine 422. Catalysis depends on residues threonine 102, threonine 178, aspartate 179, and lysine 256.

Belongs to the asparaginase 1 family. GatD subfamily. In terms of assembly, heterodimer of GatD and GatE.

It catalyses the reaction L-glutamyl-tRNA(Gln) + L-glutamine + ATP + H2O = L-glutaminyl-tRNA(Gln) + L-glutamate + ADP + phosphate + H(+). Its function is as follows. Allows the formation of correctly charged Gln-tRNA(Gln) through the transamidation of misacylated Glu-tRNA(Gln) in organisms which lack glutaminyl-tRNA synthetase. The reaction takes place in the presence of glutamine and ATP through an activated gamma-phospho-Glu-tRNA(Gln). The GatDE system is specific for glutamate and does not act on aspartate. The protein is Glutamyl-tRNA(Gln) amidotransferase subunit D of Pyrococcus furiosus (strain ATCC 43587 / DSM 3638 / JCM 8422 / Vc1).